The following is a 364-amino-acid chain: Coproporphyrin III ferrochelatase (364 aa).

Fe-coproporphyrin III contacts are provided by Arg29 and Tyr118. Residues His169 and Glu250 each coordinate Fe(2+).

This sequence belongs to the ferrochelatase family.

It is found in the cytoplasm. It catalyses the reaction Fe-coproporphyrin III + 2 H(+) = coproporphyrin III + Fe(2+). The protein operates within porphyrin-containing compound metabolism; protoheme biosynthesis. Functionally, involved in coproporphyrin-dependent heme b biosynthesis. Catalyzes the insertion of ferrous iron into coproporphyrin III to form Fe-coproporphyrin III. The protein is Coproporphyrin III ferrochelatase of Streptococcus pneumoniae (strain Taiwan19F-14).